A 223-amino-acid chain; its full sequence is Large ribosomal subunit protein bL25 (223 aa).

The tract at residues 198-223 (EEIGDRPRSAEEGAAPVKERKLRESE) is disordered.

It belongs to the bacterial ribosomal protein bL25 family. CTC subfamily. Part of the 50S ribosomal subunit; part of the 5S rRNA/L5/L18/L25 subcomplex. Contacts the 5S rRNA. Binds to the 5S rRNA independently of L5 and L18.

This is one of the proteins that binds to the 5S RNA in the ribosome where it forms part of the central protuberance. The sequence is that of Large ribosomal subunit protein bL25 from Thermomicrobium roseum (strain ATCC 27502 / DSM 5159 / P-2).